A 293-amino-acid polypeptide reads, in one-letter code: Lysosomal amino acid transporter 1 homolog (293 aa).

Over Met1–Ala37 the chain is Lumenal. An N-linked (GlcNAc...) asparagine glycan is attached at Asn10. The PQ-loop 1 domain occupies Trp34–Tyr100. A helical transmembrane segment spans residues Ser38–Ile58. Topologically, residues Lys59–Ser71 are cytoplasmic. The helical transmembrane segment at Leu72 to Ala92 threads the bilayer. Topologically, residues Asp93–Pro96 are lumenal. Residues Leu97 to Phe117 traverse the membrane as a helical segment. Over His118–Ser126 the chain is Cytoplasmic. The chain crosses the membrane as a helical span at residues Leu127–Pro147. The Lumenal segment spans residues Leu148–Val182. The helical transmembrane segment at Val183–Ile203 threads the bilayer. The region spanning Ser191–Gln243 is the PQ-loop 2 domain. At Arg204–Gly214 the chain is on the cytoplasmic side. The helical transmembrane segment at Ile215 to Leu235 threads the bilayer. Residues Leu236 to Pro254 lie on the Lumenal side of the membrane. Residues Trp255–Val275 traverse the membrane as a helical segment. Residues Tyr276–Ser293 lie on the Cytoplasmic side of the membrane. The Di-leucine motif signature appears at Leu290–Leu291.

The protein belongs to the laat-1 family.

The protein resides in the lysosome membrane. Amino acid transporter that specifically mediates the pH-dependent export of the cationic amino acids arginine, histidine and lysine from lysosomes. In Rattus norvegicus (Rat), this protein is Lysosomal amino acid transporter 1 homolog (Slc66a1).